The sequence spans 68 residues: Ferredoxin Fdx (68 aa).

[3Fe-4S] cluster-binding residues include Cys-12, Gln-13, Ala-16, Cys-18, and Cys-56.

Requires [3Fe-4S] cluster as cofactor.

Functionally, ferredoxin that is the redox partner of cytochrome CYP51, a sterol 14alpha-demethylase encoded by an adjacent gene. The protein is Ferredoxin Fdx of Mycobacterium tuberculosis (strain ATCC 25618 / H37Rv).